Consider the following 190-residue polypeptide: Secreted isochorismatase effector Isc1 (190 aa).

Active-site residues include Asp-26, Lys-100, and Cys-133.

This sequence belongs to the isochorismatase family.

The protein resides in the secreted. The protein localises to the host cytoplasm. Its subcellular location is the host nucleus. It catalyses the reaction isochorismate + H2O = (2S,3S)-2,3-dihydroxy-2,3-dihydrobenzoate + pyruvate. Its function is as follows. Secreted isochorismatase required for full virulence of V.dahliae. Suppresses salicylate-mediated innate immunity of the host by disrupting the plant salicylate metabolism pathway via hydrolysis of its isochorismate precursor. This is Secreted isochorismatase effector Isc1 from Verticillium dahliae (strain VdLs.17 / ATCC MYA-4575 / FGSC 10137) (Verticillium wilt).